Consider the following 287-residue polypeptide: MRLIVVSGHSGAGKSVALRVLEDLGYYCVDNLPVNLLDAFVQSVSESKQNVAVSIDIRNIPKKLKELNTTLEKLKAELDVTVLFLDANKETLLTRYSETRRIHPLSLDSQSLSLDQAIELEQEILMPLKAHADLVLNSSGQSLHDLSETVRMRVEGRERKDLVMVFESFGFKYGLPSDADYVFDVRFLPNPHWEPALRPLTGLDGPIGAFLEQHQSVLDLKYQIESFIETWLPLLEKNNRSYLTVAIGCTGGKHRSVYLTQKIGEFFADKGHQVQIRHTSLEKNVKE.

8-15 serves as a coordination point for ATP; sequence GHSGAGKS. Position 56 to 59 (56 to 59) interacts with GTP; that stretch reads DIRN.

Belongs to the RapZ-like family.

Displays ATPase and GTPase activities. The protein is Nucleotide-binding protein VIBHAR_03667 of Vibrio campbellii (strain ATCC BAA-1116).